The chain runs to 896 residues: Trehalose-phosphatase (896 aa).

Residues 1 to 554 (MTTTAQDNSP…SNDDMERKMT (554 aa)) form a glycosyltransferase region.

It in the N-terminal section; belongs to the glycosyltransferase 20 family. In the C-terminal section; belongs to the trehalose phosphatase family. As to quaternary structure, the trehalose synthase complex is composed of the two catalytic subunits TPS1 and TPS2, and at least one of the two regulatory subunits TPS3 or TSL1. Mg(2+) is required as a cofactor.

It localises to the cytoplasm. It carries out the reaction alpha,alpha-trehalose 6-phosphate + H2O = alpha,alpha-trehalose + phosphate. It functions in the pathway carbohydrate biosynthesis. With respect to regulation, inhibited by EDTA. Phosphatase catalytic subunit of the trehalose synthase complex that catalyzes the production of trehalose from glucose-6-phosphate and UDP-alpha-D-glucose in a two step process. The protein is Trehalose-phosphatase of Saccharomyces cerevisiae (strain ATCC 204508 / S288c) (Baker's yeast).